The chain runs to 772 residues: Cadherin-19 (772 aa).

The N-terminal stretch at 1-21 is a signal peptide; sequence MNCYLLLRFMLGIPLLWPCLG. Residues 22-43 constitute a propeptide that is removed on maturation; the sequence is ATENSQTKKVKQPVRSHLRVKR. Cadherin domains lie at 44–148, 149–256, 257–370, 371–470, and 470–581; these read GWVW…EPKF, LDEP…KPIF, KESL…PPLF, LLPY…APEF, and FSQY…STQT. The Extracellular portion of the chain corresponds to 44–596; that stretch reads GWVWNQFFVP…LVLSMGFKTE (553 aa). N-linked (GlcNAc...) asparagine glycans are attached at residues asparagine 57 and asparagine 74. N-linked (GlcNAc...) asparagine glycosylation is found at asparagine 419, asparagine 437, asparagine 508, asparagine 515, asparagine 516, and asparagine 534. The helical transmembrane segment at 597 to 617 threads the bilayer; that stretch reads VIIAILICIMIIFGFIFLTLG. At 618–772 the chain is on the cytoplasmic side; it reads LKQRRKQILF…MFGSAVQSNN (155 aa).

Expressed in many tissues, with the exception of uterus.

It is found in the cell membrane. Functionally, cadherins are calcium-dependent cell adhesion proteins. They preferentially interact with themselves in a homophilic manner in connecting cells; cadherins may thus contribute to the sorting of heterogeneous cell types. The chain is Cadherin-19 (CDH19) from Homo sapiens (Human).